We begin with the raw amino-acid sequence, 539 residues long: 4-coumarate--CoA ligase 5 (539 aa).

Serine 185, serine 186, glycine 187, threonine 188, threonine 189, and lysine 193 together coordinate ATP. Positions 235 and 239 each coordinate (E)-4-coumaroyl-AMP. Position 256 (arginine 256) interacts with CoA. The interval 258–327 is SBD1; it reads DTVKMLQLVE…AKLPNAVLGQ (70 aa). (E)-4-coumaroyl-AMP contacts are provided by alanine 305, glutamine 327, glycine 328, threonine 332, and methionine 340. 3 residues coordinate ATP: glutamine 327, glycine 328, and threonine 332. The segment at 328 to 395 is SBD2; sequence GYGMTEAGPV…IRGKQIMKGY (68 aa). Positions 416 and 431 each coordinate ATP. The (E)-4-coumaroyl-AMP site is built by lysine 433 and lysine 437. CoA contacts are provided by lysine 439 and glycine 440. Lysine 522 lines the ATP pocket.

It belongs to the ATP-dependent AMP-binding enzyme family. The cofactor is Mg(2+). As to expression, expressed in roots, stems, leaf blades, leaf sheaths and spikelets.

It catalyses the reaction (E)-ferulate + ATP + CoA = (E)-feruloyl-CoA + AMP + diphosphate. The catalysed reaction is (E)-4-coumarate + ATP + CoA = (E)-4-coumaroyl-CoA + AMP + diphosphate. The enzyme catalyses (E)-sinapate + ATP + CoA = (E)-sinapoyl-CoA + AMP + diphosphate. It carries out the reaction (E)-caffeate + ATP + CoA = (E)-caffeoyl-CoA + AMP + diphosphate. It catalyses the reaction (E)-cinnamate + ATP + CoA = (E)-cinnamoyl-CoA + AMP + diphosphate. The catalysed reaction is (E)-ferulate + ATP + H(+) = (E)-feruloyl-AMP + diphosphate. The enzyme catalyses (E)-feruloyl-AMP + CoA = (E)-feruloyl-CoA + AMP + H(+). It carries out the reaction (E)-4-coumarate + ATP + H(+) = (E)-4-coumaroyl-AMP + diphosphate. It catalyses the reaction (E)-4-coumaroyl-AMP + CoA = (E)-4-coumaroyl-CoA + AMP + H(+). The catalysed reaction is (E)-sinapate + ATP + H(+) = (E)-sinapoyl-AMP + diphosphate. The enzyme catalyses (E)-sinapoyl-AMP + CoA = (E)-sinapoyl-CoA + AMP + H(+). It carries out the reaction (E)-caffeate + ATP + H(+) = (E)-caffeoyl-AMP + diphosphate. It catalyses the reaction (E)-caffeoyl-AMP + CoA = (E)-caffeoyl-CoA + AMP + H(+). The protein operates within phytoalexin biosynthesis; 3,4',5-trihydroxystilbene biosynthesis; 3,4',5-trihydroxystilbene from trans-4-coumarate: step 1/2. In terms of biological role, involved in the phenylpropanoid metabolism by mediating the activation of a number of hydroxycinnamates for the biosynthesis of monolignols and other phenolic secondary metabolites. Catalyzes the formation of CoA esters of cinnamate, 4-coumarate, caffeate and ferulate. Is also able to convert sinapate to its corresponding CoA ester, a reaction that is rarely observed in 4CL catalysis. Is more efficient with substrates in the following order: ferulate &gt; 4-coumarate &gt; sinapate &gt; caffeate &gt; cinnamate. Follows a two-step reaction mechanism, wherein the carboxylate substrate first undergoes adenylation by ATP, followed by a thioesterification in the presence of CoA to yield the final CoA thioesters. The polypeptide is 4-coumarate--CoA ligase 5 (Oryza sativa subsp. japonica (Rice)).